Here is a 350-residue protein sequence, read N- to C-terminus: MTSTKISLTQTVQKGGCAAKVAASELREILKQVKFPAAHPALMVDGGLFDDAAIYKINDEIALVQTLDFFTPIVDTPKLFGEIAAANALSDVYAMGGKPKTAMGILAFPLATLPKEVIVDVMQGASDKIAEADANFVGGHSIDDDTLKFGLSVTGFVNPQQVWTNAGAKVGDHLILTKPLGTGTLTAGLKRQEVQEADIMEALQSMATVNNAVDYMTPVLKNEVHAATDITGFGLSGHGMQLANASQVSLRISFSKIPRFAKALAFLEKGFLTKAHRSNAEYTKEAISVAGLESLQQHLLHDPQTSGGLLLSVSREVSADMVQALRAKFKSAEIIGEVLPRQDKAVIFEP.

The active site involves Cys-17. ATP contacts are provided by residues Lys-20 and 48 to 50; that span reads LFD. Asp-51 serves as a coordination point for Mg(2+). Residues Asp-68, Asp-91, and 139–141 each bind ATP; that span reads GHS. Asp-91 lines the Mg(2+) pocket. Position 229 (Asp-229) interacts with Mg(2+).

Belongs to the selenophosphate synthase 1 family. Class I subfamily. In terms of assembly, homodimer. The cofactor is Mg(2+).

It carries out the reaction hydrogenselenide + ATP + H2O = selenophosphate + AMP + phosphate + 2 H(+). Its function is as follows. Synthesizes selenophosphate from selenide and ATP. The protein is Selenide, water dikinase of Bdellovibrio bacteriovorus (strain ATCC 15356 / DSM 50701 / NCIMB 9529 / HD100).